The chain runs to 527 residues: DNA damage-binding protein cmr1 (527 aa).

A disordered region spans residues Ala-35–Arg-90. A compositionally biased stretch (basic residues) spans Lys-52–Val-62. 7 WD repeats span residues Leu-185–Ala-226, Pro-249–Lys-289, Ser-296–Val-336, Leu-341–Pro-381, Val-388–Lys-427, Gly-450–Leu-493, and Asp-496–Met-527. Positions Thr-284–Gly-303 are disordered.

It belongs to the WD repeat DDB2/WDR76 family.

In terms of biological role, DNA-binding protein that binds to both single- and double-stranded DNA. Binds preferentially to UV-damaged DNA. May be involved in DNA-metabolic processes. The protein is DNA damage-binding protein cmr1 of Neosartorya fischeri (strain ATCC 1020 / DSM 3700 / CBS 544.65 / FGSC A1164 / JCM 1740 / NRRL 181 / WB 181) (Aspergillus fischerianus).